Here is a 380-residue protein sequence, read N- to C-terminus: Actin-like protein (380 aa).

The protein belongs to the actin family. ARP1 subfamily.

It localises to the cytoplasm. Its subcellular location is the cytoskeleton. Functionally, involved in nuclear migration. May function as a component of the dynactin complex which activates force generation by cytoplasmic dynein. This Neurospora crassa (strain ATCC 24698 / 74-OR23-1A / CBS 708.71 / DSM 1257 / FGSC 987) protein is Actin-like protein (ro-4).